Here is a 327-residue protein sequence, read N- to C-terminus: Ribosomal RNA small subunit methyltransferase H (327 aa).

Residues 37–39 (GGY), Asp55, Phe82, Asp99, and Gln106 each bind S-adenosyl-L-methionine. A disordered region spans residues 303 to 327 (IATRTDAPAQPVAPETLGLPQLEGF).

This sequence belongs to the methyltransferase superfamily. RsmH family.

The protein localises to the cytoplasm. The catalysed reaction is cytidine(1402) in 16S rRNA + S-adenosyl-L-methionine = N(4)-methylcytidine(1402) in 16S rRNA + S-adenosyl-L-homocysteine + H(+). In terms of biological role, specifically methylates the N4 position of cytidine in position 1402 (C1402) of 16S rRNA. This chain is Ribosomal RNA small subunit methyltransferase H, found in Jannaschia sp. (strain CCS1).